The primary structure comprises 540 residues: Transcription termination/antitermination protein NusA (540 aa).

An S1 motif domain is found at Gly-144–Ser-214. A KH domain is found at Asp-319–Arg-386. The interval Val-457 to Leu-540 is disordered. A compositionally biased stretch (pro residues) spans Thr-461–Ile-489. Residues Asp-512–Ser-522 are compositionally biased toward basic and acidic residues. Residues Ala-523–Leu-540 show a composition bias toward polar residues.

It belongs to the NusA family. Monomer. Binds directly to the core enzyme of the DNA-dependent RNA polymerase and to nascent RNA.

The protein resides in the cytoplasm. Its function is as follows. Participates in both transcription termination and antitermination. This is Transcription termination/antitermination protein NusA from Mycoplasma pneumoniae (strain ATCC 29342 / M129 / Subtype 1) (Mycoplasmoides pneumoniae).